A 291-amino-acid chain; its full sequence is Diaminopimelate epimerase (291 aa).

Residues Asn13, Gln46, and Asn66 each coordinate substrate. Cys75 (proton donor) is an active-site residue. Residues 76–77 (GN), Asn156, Asn189, and 207–208 (ER) each bind substrate. Cys216 acts as the Proton acceptor in catalysis. 217–218 (GS) provides a ligand contact to substrate.

It belongs to the diaminopimelate epimerase family. Homodimer.

The protein localises to the cytoplasm. It carries out the reaction (2S,6S)-2,6-diaminopimelate = meso-2,6-diaminopimelate. Its pathway is amino-acid biosynthesis; L-lysine biosynthesis via DAP pathway; DL-2,6-diaminopimelate from LL-2,6-diaminopimelate: step 1/1. Catalyzes the stereoinversion of LL-2,6-diaminopimelate (L,L-DAP) to meso-diaminopimelate (meso-DAP), a precursor of L-lysine and an essential component of the bacterial peptidoglycan. The chain is Diaminopimelate epimerase from Rhodospirillum centenum (strain ATCC 51521 / SW).